We begin with the raw amino-acid sequence, 580 residues long: Fumarate hydratase class I, aerobic (580 aa).

Residues C105, C224, and C318 each contribute to the [4Fe-4S] cluster site.

The protein belongs to the class-I fumarase family. As to quaternary structure, homodimer. [4Fe-4S] cluster is required as a cofactor.

The catalysed reaction is (S)-malate = fumarate + H2O. The enzyme catalyses oxaloacetate = enol-oxaloacetate. It functions in the pathway carbohydrate metabolism; tricarboxylic acid cycle; (S)-malate from fumarate: step 1/1. In terms of biological role, catalyzes the reversible hydration of fumarate to (S)-malate. Functions as an aerobic enzyme in the direction of malate formation as part of the citric acid cycle. Accounts for about 80% of the fumarase activity when the bacteria grow aerobically. To a lesser extent, also displays D-tartrate dehydratase activity in vitro, but is not able to convert (R)-malate, L-tartrate or meso-tartrate. Can also catalyze the isomerization of enol- to keto-oxaloacetate. This Salmonella typhimurium (strain LT2 / SGSC1412 / ATCC 700720) protein is Fumarate hydratase class I, aerobic.